We begin with the raw amino-acid sequence, 144 residues long: SLTAKDKSVVKAFWGKISGKADVVGAEALGRDKMLTAYPQTKTYFSHWADLSPGSGPVKKHGGIIMGAIGKAVGLMDDLVGGMSALSDLHAFKLRVDPGNFKILSHNILVTLAIHFPSDFTPEVHIAVDKFLAAVSAALADKYR.

Position 1 is an N-acetylserine (Ser-1). The Globin domain maps to 1 to 144; sequence SLTAKDKSVV…VSAALADKYR (144 aa). His-61 provides a ligand contact to O2. Residue His-90 participates in heme b binding.

This sequence belongs to the globin family. Heterotetramer of two alpha chains and two beta chains. As to expression, red blood cells.

Involved in oxygen transport from gills to the various peripheral tissues. This chain is Hemoglobin subunit alpha-1 (hba1), found in Oncorhynchus mykiss (Rainbow trout).